The chain runs to 32 residues: MSDIN-like toxin proprotein 3 (32 aa).

The propeptide occupies 1 to 10; sequence MSDINATRLP. Positions 11-17 form a cross-link, cyclopeptide (Val-Pro); that stretch reads VWIGYSP. Positions 18-32 are excised as a propeptide; the sequence is CVGDDAVALLNRGEG.

This sequence belongs to the MSDIN fungal toxin family. In terms of processing, processed by the macrocyclase-peptidase enzyme POPB to yield a toxic cyclic heptapeptide. POPB first removes 10 residues from the N-terminus. Conformational trapping of the remaining peptide forces the enzyme to release this intermediate rather than proceed to macrocyclization. The enzyme rebinds the remaining peptide in a different conformation and catalyzes macrocyclization of the N-terminal 7 residues.

Functionally, probable toxin that belongs to the MSDIN-like toxin family responsible for a large number of food poisoning cases and deaths. The protein is MSDIN-like toxin proprotein 3 of Amanita fuligineoides.